Here is a 663-residue protein sequence, read N- to C-terminus: Preterminal protein (663 aa).

Positions 367–376 match the Nuclear localization signal motif; that stretch reads SLPLPTRRRR. The tract at residues 374 to 414 is disordered; sequence RRRVARPAPPSPSPSPEPVELEMPPLEGEEEEEEEELPPRS. Residues 380-390 are compositionally biased toward pro residues; sequence PAPPSPSPSPE. The span at 400 to 409 shows a compositional bias: acidic residues; sequence EGEEEEEEEE. An O-(5'-phospho-DNA)-serine modification is found at Ser-575. The interval 632 to 663 is disordered; sequence QLQPMPELNDPVQLPPLRPERQRPPLGPRRPL.

Belongs to the adenoviridae terminal protein family. As to quaternary structure, heterodimer with the polymerase; this heterodimer binds to bp 9 to 18 of the genome. Interacts with host POU2F1; POU2F1 binds to the auxiliary sequences in the inverted terminal repeats and tethers the pTP-POL heterodimer to the origin DNA thereby participating in the assembly of the pre-initiation complex (POL-TP-DBP-NFIA-POU2F1). Preterminal protein is used to replicate viral genome, upon genomic encapsidation it is processed first into iTP and finally into TP by adenovirus protease.

Its subcellular location is the host nucleus matrix. Functionally, protein covalently bound to the viral DNA that acts as a primer for viral genomic replication by DNA strand displacement. Assembles on the viral origin of replication in an initiation complex with viral polymerase, DBP, host NFIA and host POU2F1/OCT1. During initiation, the polymerase covalently couples the first dCTP with Ser-580 of pTP. The terminal protein stimulates the template activity over 20 fold compared to protein-free templates. Neo-synthesized viral genomes are linked to two preterminal proteins, one for each 5' end. These new genomes are encapsidated in the nucleus, and during capsid maturation by viral protease, preterminal protein is first cleaved into intermediary (iTP), then into mature TP. May play a role in host nuclear matrix localization of genomic DNA. This is Preterminal protein from Bos taurus (Bovine).